Consider the following 57-residue polypeptide: Potassium channel toxin alpha-KTx 4.2 (57 aa).

The first 20 residues, 1 to 20, serve as a signal peptide directing secretion; it reads MKVLYGILIIFILCSMFYLS. Residues 21–22 constitute a propeptide, removed by a carboxypeptidase; sequence QE. Disulfide bonds link C29/C50, C35/C55, and C39/C57.

Belongs to the short scorpion toxin superfamily. Potassium channel inhibitor family. Alpha-KTx 04 subfamily. Expressed by the venom gland.

It localises to the secreted. Blocker for small-conductance calcium-activated potassium channels KCa2.2/KCNN2 (Kd=80 nM) and KCa2.3/KCNN3 (Kd=197 nM) and ERG1/Kv11.1/KCNH2 potassium channels (53% inhibition at 5 uM). Has also been shown to inhibit Kv1.1/KCNA1 and Nav1.7/SCN9A with a moderate potency, as well as Kv11.1/KCNH2/ERG1 and Kv1.2/KCNA2 with a low potency. The sequence is that of Potassium channel toxin alpha-KTx 4.2 from Tityus serrulatus (Brazilian scorpion).